Consider the following 98-residue polypeptide: NADH-ubiquinone oxidoreductase chain 4L (98 aa).

A run of 3 helical transmembrane segments spans residues 1–21, 26–46, and 56–76; these read MSPLHFSFYSAFTFSSLGLAF, LISALLCLESMMLSMFIPLSI, and FALVPILMLAFSACEAGTGLA.

This sequence belongs to the complex I subunit 4L family. Core subunit of respiratory chain NADH dehydrogenase (Complex I) which is composed of 45 different subunits.

It localises to the mitochondrion inner membrane. The catalysed reaction is a ubiquinone + NADH + 5 H(+)(in) = a ubiquinol + NAD(+) + 4 H(+)(out). In terms of biological role, core subunit of the mitochondrial membrane respiratory chain NADH dehydrogenase (Complex I) which catalyzes electron transfer from NADH through the respiratory chain, using ubiquinone as an electron acceptor. Part of the enzyme membrane arm which is embedded in the lipid bilayer and involved in proton translocation. This is NADH-ubiquinone oxidoreductase chain 4L (MT-ND4L) from Gallus gallus (Chicken).